Consider the following 628-residue polypeptide: Vacuolar-sorting receptor 3 (628 aa).

A signal peptide spans 1–24; that stretch reads MKQLLCYLPWLLLLTLLVSPLNDA. Over 25-569 the chain is Lumenal; that stretch reads RFVVEKNSLS…SKTGAQVRSA (545 aa). Residues 56–168 enclose the PA domain; that stretch reads QYGGSMAGTV…GFGEKLKKAI (113 aa). Residues Asn-148, Asn-294, and Asn-434 are each glycosylated (N-linked (GlcNAc...) asparagine). EGF-like domains lie at 416 to 466 and 469 to 516; these read ESNE…SHCE and GPGR…KKCE. 7 disulfide bridges follow: Cys-420/Cys-438, Cys-427/Cys-447, Cys-449/Cys-465, Cys-473/Cys-493, Cys-480/Cys-501, Cys-503/Cys-515, and Cys-545/Cys-558. In terms of domain architecture, EGF-like 3; calcium-binding spans 517–559; that stretch reads DINECKEKKACQCPECSCKNTWGSYECSCSGDLLYIRDHDTCI. A helical membrane pass occupies residues 570–590; the sequence is WAAVWLIMLSLGLAAAGAYLV. Over 591-628 the chain is Cytoplasmic; that stretch reads YKYRLRQYMDSEIRAIMAQYMPLDSQPEIPNHVNDERA. Residues 610-613 carry the Tyrosine-based internalization motif motif; that stretch reads YMPL.

It belongs to the VSR (BP-80) family. In terms of tissue distribution, expressed in seeds, seedlings, roots, leaves, flowers and siliques.

The protein localises to the membrane. Its subcellular location is the golgi apparatus membrane. It is found in the cytoplasmic vesicle. It localises to the clathrin-coated vesicle membrane. The protein resides in the prevacuolar compartment membrane. Its function is as follows. Vacuolar-sorting receptor (VSR) involved in clathrin-coated vesicles sorting from Golgi apparatus to vacuoles. This chain is Vacuolar-sorting receptor 3 (VSR3), found in Arabidopsis thaliana (Mouse-ear cress).